The following is a 142-amino-acid chain: Putative pre-16S rRNA nuclease (142 aa).

This sequence belongs to the YqgF nuclease family.

It localises to the cytoplasm. Functionally, could be a nuclease involved in processing of the 5'-end of pre-16S rRNA. The polypeptide is Putative pre-16S rRNA nuclease (Nitratidesulfovibrio vulgaris (strain DP4) (Desulfovibrio vulgaris)).